Consider the following 224-residue polypeptide: Dimethyl sulfoxide reductase transcriptional activator (224 aa).

Positions 158 to 209 constitute an HTH bat-type domain; the sequence is LTDKQREAAAAAVAKGYYATPRGADLSDLATALGISKSAVSQRLSAVESKLA.

Its function is as follows. Involved in activating dmsEABCD gene expression related to dimethyl sulfoxide (DMSO) reductase. Required for anaerobic respiration on dimethyl sulfoxide (DMSO) and trimethylamine N-oxide (TMAO). In Halobacterium salinarum (strain ATCC 700922 / JCM 11081 / NRC-1) (Halobacterium halobium), this protein is Dimethyl sulfoxide reductase transcriptional activator (dmsR).